A 172-amino-acid polypeptide reads, in one-letter code: 3-hydroxydecanoyl-[acyl-carrier-protein] dehydratase (172 aa).

The active site involves His-71.

The protein belongs to the thioester dehydratase family. FabA subfamily. In terms of assembly, homodimer.

The protein resides in the cytoplasm. The enzyme catalyses a (3R)-hydroxyacyl-[ACP] = a (2E)-enoyl-[ACP] + H2O. It catalyses the reaction (3R)-hydroxydecanoyl-[ACP] = (2E)-decenoyl-[ACP] + H2O. The catalysed reaction is (2E)-decenoyl-[ACP] = (3Z)-decenoyl-[ACP]. Its pathway is lipid metabolism; fatty acid biosynthesis. In terms of biological role, necessary for the introduction of cis unsaturation into fatty acids. Catalyzes the dehydration of (3R)-3-hydroxydecanoyl-ACP to E-(2)-decenoyl-ACP and then its isomerization to Z-(3)-decenoyl-ACP. Can catalyze the dehydratase reaction for beta-hydroxyacyl-ACPs with saturated chain lengths up to 16:0, being most active on intermediate chain length. The polypeptide is 3-hydroxydecanoyl-[acyl-carrier-protein] dehydratase (Salmonella agona (strain SL483)).